A 209-amino-acid polypeptide reads, in one-letter code: ATP-dependent Clp protease proteolytic subunit (209 aa).

Ser-106 (nucleophile) is an active-site residue. His-131 is an active-site residue.

It belongs to the peptidase S14 family. As to quaternary structure, fourteen ClpP subunits assemble into 2 heptameric rings which stack back to back to give a disk-like structure with a central cavity, resembling the structure of eukaryotic proteasomes.

The protein resides in the cytoplasm. It carries out the reaction Hydrolysis of proteins to small peptides in the presence of ATP and magnesium. alpha-casein is the usual test substrate. In the absence of ATP, only oligopeptides shorter than five residues are hydrolyzed (such as succinyl-Leu-Tyr-|-NHMec, and Leu-Tyr-Leu-|-Tyr-Trp, in which cleavage of the -Tyr-|-Leu- and -Tyr-|-Trp bonds also occurs).. Functionally, cleaves peptides in various proteins in a process that requires ATP hydrolysis. Has a chymotrypsin-like activity. Plays a major role in the degradation of misfolded proteins. This is ATP-dependent Clp protease proteolytic subunit from Brucella suis biovar 1 (strain 1330).